Consider the following 443-residue polypeptide: Eukaryotic translation initiation factor 3 subunit E (443 aa).

In terms of domain architecture, PCI spans 249 to 417 (LDLFFNAGFI…GTVVMNHPPS (169 aa)).

The protein belongs to the eIF-3 subunit E family. Component of the eukaryotic translation initiation factor 3 (eIF-3) complex.

It is found in the cytoplasm. Component of the eukaryotic translation initiation factor 3 (eIF-3) complex, which is involved in protein synthesis of a specialized repertoire of mRNAs and, together with other initiation factors, stimulates binding of mRNA and methionyl-tRNAi to the 40S ribosome. The eIF-3 complex specifically targets and initiates translation of a subset of mRNAs involved in cell proliferation. The protein is Eukaryotic translation initiation factor 3 subunit E (int-6) of Neurospora crassa (strain ATCC 24698 / 74-OR23-1A / CBS 708.71 / DSM 1257 / FGSC 987).